Here is a 344-residue protein sequence, read N- to C-terminus: Ureide permease 3 (344 aa).

The Extracellular portion of the chain corresponds to 1-10 (MYVIESKGGT). Residues 11 to 31 (ITCMLLALLFLGTWPAIMTLT) form a helical membrane-spanning segment. Over 32–42 (ERRGRLPQHTY) the chain is Cytoplasmic. The helical transmembrane segment at 43–63 (LDYTLTNLLAAVIIAFTLGEI) threads the bilayer. Residues 64–78 (SPSRPNFTTQLSQDN) lie on the Extracellular side of the membrane. Residues 79-99 (WPSVMFAMAGGIFLSLGTLAT) form a helical membrane-spanning segment. The Cytoplasmic portion of the chain corresponds to 100 to 101 (QY). The helical transmembrane segment at 102 to 122 (AWAFVGLSVTEVITASIAVVI) threads the bilayer. At 123–136 (GTTLNYFLDDRINR) the chain is on the extracellular side. Residues 137 to 157 (AEVLFPGVACFLIAVCFGSAV) traverse the membrane as a helical segment. At 158-208 (HKSNAADNKSKLQGFKSLETTSSFQMETSSIKEGKAKVGTADFLIEVEKQR) the chain is on the cytoplasmic side. An ATP-binding site is contributed by 209–216 (AIKVFGKS). A helical transmembrane segment spans residues 209 to 229 (AIKVFGKSTIIGLAITFFAVP). Residues 230–235 (KLNVYT) are Extracellular-facing. The helical transmembrane segment at 236–256 (AFFYFSISSFGVGLILNIIFL) threads the bilayer. Topologically, residues 257–278 (YWPILGLPRSSFKAYLNDWNGR) are cytoplasmic. Residues 279 to 299 (GWSFLAGFLCGFGNGLQFMGG) form a helical membrane-spanning segment. Residues 300–344 (QAAGYAAAGAVQIENKHFGGYCCLENTKDHQEKHIHFLSVCYLCS) are Extracellular-facing.

It belongs to the plant ureide permease (TC 2.A.7.19) family.

The protein resides in the membrane. Its function is as follows. Proton-coupled transporter that transports a wide spectrum of oxo derivatives of heterocyclic nitrogen compounds. This chain is Ureide permease 3, found in Arabidopsis thaliana (Mouse-ear cress).